Here is a 141-residue protein sequence, read N- to C-terminus: Large ribosomal subunit protein uL11c (141 aa).

The protein belongs to the universal ribosomal protein uL11 family. As to quaternary structure, part of the ribosomal stalk of the 50S ribosomal subunit. Interacts with L10 and the large rRNA to form the base of the stalk. L10 forms an elongated spine to which L12 dimers bind in a sequential fashion forming a multimeric L10(L12)X complex.

It is found in the plastid. The protein localises to the chloroplast. In terms of biological role, forms part of the ribosomal stalk which helps the ribosome interact with GTP-bound translation factors. The protein is Large ribosomal subunit protein uL11c of Thalassiosira pseudonana (Marine diatom).